Consider the following 311-residue polypeptide: 4-diphosphocytidyl-2-C-methyl-D-erythritol kinase (311 aa).

Lys-16 is a catalytic residue. ATP is bound at residue 101-111 (PVAGGMAGGSA). The active site involves Asp-143.

The protein belongs to the GHMP kinase family. IspE subfamily.

It carries out the reaction 4-CDP-2-C-methyl-D-erythritol + ATP = 4-CDP-2-C-methyl-D-erythritol 2-phosphate + ADP + H(+). The protein operates within isoprenoid biosynthesis; isopentenyl diphosphate biosynthesis via DXP pathway; isopentenyl diphosphate from 1-deoxy-D-xylulose 5-phosphate: step 3/6. In terms of biological role, catalyzes the phosphorylation of the position 2 hydroxy group of 4-diphosphocytidyl-2C-methyl-D-erythritol. The polypeptide is 4-diphosphocytidyl-2-C-methyl-D-erythritol kinase (Rhodococcus jostii (strain RHA1)).